A 430-amino-acid chain; its full sequence is Argininosuccinate lyase (430 aa).

The protein belongs to the lyase 1 family. Argininosuccinate lyase subfamily.

The protein resides in the cytoplasm. The enzyme catalyses 2-(N(omega)-L-arginino)succinate = fumarate + L-arginine. It participates in amino-acid biosynthesis; L-arginine biosynthesis; L-arginine from L-ornithine and carbamoyl phosphate: step 3/3. The polypeptide is Argininosuccinate lyase (Sorangium cellulosum (strain So ce56) (Polyangium cellulosum (strain So ce56))).